The following is a 392-amino-acid chain: MSFLTLKDVDLKDKKVLVRVDFNVPVKDGKVTSKVRIEAAIPTIQYILDQGGAVILMSHLGRPTEGEYDSQFSLEPVAKALSEIINKPVKFAKDWLDGVDVKAGEIVMCENVRFNIGEKKSTDDLSKKIASLGDVFVMDAFATAHRAQASTYGVAKYIPVACAGILLTNEIQALEKALKSPKKPMAAIVGGSKVSTKLSVLNNLLDKVEILIVGGGIANTFIKAEGFDVGNSLYEQDLVAEATEILAKAKALGVNIPVPVDVRVAKEFSENAQAIIKKVSYVVADEMILDIGPESQKIIAELLKSANTILWNGPVGVFEFDNFAEGTKALSLAIAQSHAFSVAGGGDTIAAIEKFGIKDQVSYISTAGGAFLEFLEGKKLPAIEILKEKAIR.

Substrate contacts are provided by residues 21-23, arginine 36, 59-62, arginine 113, and arginine 146; these read DFN and HLGR. ATP contacts are provided by residues lysine 197, glutamate 319, and 345 to 348; that span reads GGDT.

It belongs to the phosphoglycerate kinase family. Monomer.

It localises to the cytoplasm. It catalyses the reaction (2R)-3-phosphoglycerate + ATP = (2R)-3-phospho-glyceroyl phosphate + ADP. The protein operates within carbohydrate degradation; glycolysis; pyruvate from D-glyceraldehyde 3-phosphate: step 2/5. This Francisella tularensis subsp. holarctica (strain FTNF002-00 / FTA) protein is Phosphoglycerate kinase.